The primary structure comprises 141 residues: Nucleoside diphosphate kinase (141 aa).

ATP is bound by residues Lys-11, Phe-59, Arg-87, Thr-93, Arg-104, and Asn-114. The active-site Pros-phosphohistidine intermediate is His-117.

It belongs to the NDK family. In terms of assembly, homotetramer. It depends on Mg(2+) as a cofactor.

The protein localises to the cytoplasm. It carries out the reaction a 2'-deoxyribonucleoside 5'-diphosphate + ATP = a 2'-deoxyribonucleoside 5'-triphosphate + ADP. It catalyses the reaction a ribonucleoside 5'-diphosphate + ATP = a ribonucleoside 5'-triphosphate + ADP. Its function is as follows. Major role in the synthesis of nucleoside triphosphates other than ATP. The ATP gamma phosphate is transferred to the NDP beta phosphate via a ping-pong mechanism, using a phosphorylated active-site intermediate. This is Nucleoside diphosphate kinase from Burkholderia mallei (strain NCTC 10247).